Reading from the N-terminus, the 572-residue chain is MRTSQYMLSTLKETPADAEVISHQLMLRAGMIRKLASGLYTWLPTGLRVLRKVENIVREEMNNAGAIEVSMPVVQPADLWVESGRWDQYGPELLRFVDRGERPFVLGPTHEEVITDLIRNEISSYKQLPLNFFQIQTKFRDEVRPRFGVMRSREFLMKDAYSFHTSQESLQVTYDAMYAAYSQIFSRMDLDFRAVQADTGSIGGNASHEFQVLAASGEDDIVFSTDSDYAANIELAEAVAPKLGRAEAKEELHLVDTPNAKTIAELVEQFKLPVEKTVKTLLVKATEESGHKLVALLVRGDHELNEIKAEKIAQVASPLTFATEEEIRATIGAGPGSLGPVKLSIPVVVDRTVAAMSDFSAGANIDGKHYFGINWERDVALPQVADIRNVVEGDISPDGKGTLQIKRGIEVGHIFQLGSKYSEALKATVQGEDGRNQTLTMGCYGIGVTRVVAAAIEQNHDERGIIWPDAIAPFHVAILPMNMHKSFRVKEVAEDIYQQLRAKGIEVLLDDRKERPGVMFADMELIGVPHTIVIGDRNLDSEEIEYKHRRIGEKQMIKTNEIVDFLLANIVR.

The protein belongs to the class-II aminoacyl-tRNA synthetase family. ProS type 1 subfamily. As to quaternary structure, homodimer.

It localises to the cytoplasm. The catalysed reaction is tRNA(Pro) + L-proline + ATP = L-prolyl-tRNA(Pro) + AMP + diphosphate. Functionally, catalyzes the attachment of proline to tRNA(Pro) in a two-step reaction: proline is first activated by ATP to form Pro-AMP and then transferred to the acceptor end of tRNA(Pro). As ProRS can inadvertently accommodate and process non-cognate amino acids such as alanine and cysteine, to avoid such errors it has two additional distinct editing activities against alanine. One activity is designated as 'pretransfer' editing and involves the tRNA(Pro)-independent hydrolysis of activated Ala-AMP. The other activity is designated 'posttransfer' editing and involves deacylation of mischarged Ala-tRNA(Pro). The misacylated Cys-tRNA(Pro) is not edited by ProRS. In Pectobacterium carotovorum subsp. carotovorum (strain PC1), this protein is Proline--tRNA ligase.